The chain runs to 551 residues: Methionine--tRNA ligase (551 aa).

A 'HIGH' region motif is present at residues 12–22 (PYANGPLHFGH). Zn(2+) contacts are provided by Cys-144, Cys-147, Cys-157, and Cys-160. A 'KMSKS' region motif is present at residues 330–334 (QFSKS). Position 333 (Lys-333) interacts with ATP.

This sequence belongs to the class-I aminoacyl-tRNA synthetase family. MetG type 1 subfamily. Monomer. Requires Zn(2+) as cofactor.

The protein resides in the cytoplasm. It catalyses the reaction tRNA(Met) + L-methionine + ATP = L-methionyl-tRNA(Met) + AMP + diphosphate. In terms of biological role, is required not only for elongation of protein synthesis but also for the initiation of all mRNA translation through initiator tRNA(fMet) aminoacylation. This is Methionine--tRNA ligase from Chlamydia abortus (strain DSM 27085 / S26/3) (Chlamydophila abortus).